The following is a 476-amino-acid chain: Aspartyl/glutamyl-tRNA(Asn/Gln) amidotransferase subunit B (476 aa).

Belongs to the GatB/GatE family. GatB subfamily. Heterotrimer of A, B and C subunits.

The enzyme catalyses L-glutamyl-tRNA(Gln) + L-glutamine + ATP + H2O = L-glutaminyl-tRNA(Gln) + L-glutamate + ADP + phosphate + H(+). It catalyses the reaction L-aspartyl-tRNA(Asn) + L-glutamine + ATP + H2O = L-asparaginyl-tRNA(Asn) + L-glutamate + ADP + phosphate + 2 H(+). Its function is as follows. Allows the formation of correctly charged Asn-tRNA(Asn) or Gln-tRNA(Gln) through the transamidation of misacylated Asp-tRNA(Asn) or Glu-tRNA(Gln) in organisms which lack either or both of asparaginyl-tRNA or glutaminyl-tRNA synthetases. The reaction takes place in the presence of glutamine and ATP through an activated phospho-Asp-tRNA(Asn) or phospho-Glu-tRNA(Gln). In Clostridium botulinum (strain 657 / Type Ba4), this protein is Aspartyl/glutamyl-tRNA(Asn/Gln) amidotransferase subunit B.